The chain runs to 490 residues: Betaine aldehyde dehydrogenase (490 aa).

Residues threonine 26, isoleucine 27, and aspartate 93 each coordinate K(+). Glycine 150–tryptophan 152 contacts NAD(+). Lysine 162 (charge relay system) is an active-site residue. Position 176-179 (lysine 176–glutamate 179) interacts with NAD(+). Position 180 (valine 180) interacts with K(+). Glycine 230–serine 233 contacts NAD(+). Leucine 246 lines the K(+) pocket. Glutamate 252 acts as the Proton acceptor in catalysis. Positions 254, 286, and 387 each coordinate NAD(+). The active-site Nucleophile is cysteine 286. Cysteine 286 carries the post-translational modification Cysteine sulfenic acid (-SOH). K(+) is bound by residues lysine 457 and glycine 460. The Charge relay system role is filled by glutamate 464.

This sequence belongs to the aldehyde dehydrogenase family. Dimer of dimers. K(+) is required as a cofactor.

The catalysed reaction is betaine aldehyde + NAD(+) + H2O = glycine betaine + NADH + 2 H(+). It participates in amine and polyamine biosynthesis; betaine biosynthesis via choline pathway; betaine from betaine aldehyde: step 1/1. Involved in the biosynthesis of the osmoprotectant glycine betaine. Catalyzes the irreversible oxidation of betaine aldehyde to the corresponding acid. This Escherichia coli O6:H1 (strain CFT073 / ATCC 700928 / UPEC) protein is Betaine aldehyde dehydrogenase.